The following is a 134-amino-acid chain: Large ribosomal subunit protein eL32 (134 aa).

It belongs to the eukaryotic ribosomal protein eL32 family.

The protein is Large ribosomal subunit protein eL32 (RpL32) of Drosophila acanthoptera (Fruit fly).